A 339-amino-acid polypeptide reads, in one-letter code: N-acetyl-gamma-glutamyl-phosphate reductase (339 aa).

Cys-145 is a catalytic residue.

This sequence belongs to the NAGSA dehydrogenase family. Type 1 subfamily.

The protein resides in the cytoplasm. It carries out the reaction N-acetyl-L-glutamate 5-semialdehyde + phosphate + NADP(+) = N-acetyl-L-glutamyl 5-phosphate + NADPH + H(+). The protein operates within amino-acid biosynthesis; L-arginine biosynthesis; N(2)-acetyl-L-ornithine from L-glutamate: step 3/4. Its function is as follows. Catalyzes the NADPH-dependent reduction of N-acetyl-5-glutamyl phosphate to yield N-acetyl-L-glutamate 5-semialdehyde. This Thermotoga maritima (strain ATCC 43589 / DSM 3109 / JCM 10099 / NBRC 100826 / MSB8) protein is N-acetyl-gamma-glutamyl-phosphate reductase.